Consider the following 134-residue polypeptide: Antifungal protein ginkbilobin-2 (134 aa).

The N-terminal stretch at 1–26 is a signal peptide; it reads MKTMRMNSAFILAFALAAAMLILTEA. A Gnk2-homologous domain is found at 29 to 134; sequence TAFVSSACNT…CFIQYEQRSF (106 aa). 3 disulfide bridges follow: Cys36/Cys112, Cys88/Cys97, and Cys100/Cys125. Alpha-D-mannopyranose is bound at residue Asn37. Positions 119 and 130 each coordinate alpha-D-mannopyranose.

Binds actin in vitro.

The protein resides in the secreted. Functionally, possesses antifungal activity against F.oxysporum, T.reesei and C.albicans. Weakly inhibits the aspartic acid protease pepsin activity. Exerts antifungal activity against S.cerevisiae and F.culmorum through its carbohydrate-binding specificity. Acts as a lectin that stricly recognizes alpha-1,2-linked mannose moieties and interacts with the yeast cell wall mannan polysaccharide. Can interfere with the fungal actin remodeling resulting to the activation of an actin-dependent cell death. The polypeptide is Antifungal protein ginkbilobin-2 (Ginkgo biloba (Ginkgo)).